The sequence spans 473 residues: Sucrose-6-phosphate hydrolase (473 aa).

Residues 44-47 (LLND), Gln-63, 106-107 (YS), 167-168 (RD), and Glu-224 each bind substrate. The active site involves Asp-47.

This sequence belongs to the glycosyl hydrolase 32 family.

It localises to the cytoplasm. It carries out the reaction Hydrolysis of terminal non-reducing beta-D-fructofuranoside residues in beta-D-fructofuranosides.. The protein operates within glycan biosynthesis; sucrose metabolism. The sequence is that of Sucrose-6-phosphate hydrolase (scrB) from Lactococcus lactis subsp. lactis (Streptococcus lactis).